Consider the following 288-residue polypeptide: UDP-3-O-acyl-N-acetylglucosamine deacetylase (288 aa).

Residues His79, His236, and Asp240 each coordinate Zn(2+). The Proton donor role is filled by His263.

The protein belongs to the LpxC family. Zn(2+) serves as cofactor.

The catalysed reaction is a UDP-3-O-[(3R)-3-hydroxyacyl]-N-acetyl-alpha-D-glucosamine + H2O = a UDP-3-O-[(3R)-3-hydroxyacyl]-alpha-D-glucosamine + acetate. The protein operates within glycolipid biosynthesis; lipid IV(A) biosynthesis; lipid IV(A) from (3R)-3-hydroxytetradecanoyl-[acyl-carrier-protein] and UDP-N-acetyl-alpha-D-glucosamine: step 2/6. Its function is as follows. Catalyzes the hydrolysis of UDP-3-O-myristoyl-N-acetylglucosamine to form UDP-3-O-myristoylglucosamine and acetate, the committed step in lipid A biosynthesis. In Rickettsia africae (strain ESF-5), this protein is UDP-3-O-acyl-N-acetylglucosamine deacetylase.